Consider the following 545-residue polypeptide: Membrane protein insertase YidC (545 aa).

Residues 6-26 (NLLLIALLFVSFMIWQAWQTD) form a helical membrane-spanning segment. A disordered region spans residues 31-54 (PVAQTTQQTSNPATGDAASSAVPA). The next 4 helical transmembrane spans lie at 342 to 362 (KFIHGFIGNWGFSIIIITFIV), 417 to 437 (LGGCLPLVIQMPIFLALYYML), 455 to 475 (LSAQDPYYILPILMGVTMFFI), and 496 to 516 (PVIFTVFFLWFPSGLVLYYIV).

Belongs to the OXA1/ALB3/YidC family. Type 1 subfamily. In terms of assembly, interacts with the Sec translocase complex via SecD. Specifically interacts with transmembrane segments of nascent integral membrane proteins during membrane integration.

The protein localises to the cell inner membrane. In terms of biological role, required for the insertion and/or proper folding and/or complex formation of integral membrane proteins into the membrane. Involved in integration of membrane proteins that insert both dependently and independently of the Sec translocase complex, as well as at least some lipoproteins. Aids folding of multispanning membrane proteins. The protein is Membrane protein insertase YidC of Serratia proteamaculans (strain 568).